A 289-amino-acid chain; its full sequence is Ribosomal RNA small subunit methyltransferase A (289 aa).

S-adenosyl-L-methionine is bound by residues N21, L23, G48, E69, D94, and N120.

Belongs to the class I-like SAM-binding methyltransferase superfamily. rRNA adenine N(6)-methyltransferase family. RsmA subfamily.

It localises to the cytoplasm. It carries out the reaction adenosine(1518)/adenosine(1519) in 16S rRNA + 4 S-adenosyl-L-methionine = N(6)-dimethyladenosine(1518)/N(6)-dimethyladenosine(1519) in 16S rRNA + 4 S-adenosyl-L-homocysteine + 4 H(+). Functionally, specifically dimethylates two adjacent adenosines (A1518 and A1519) in the loop of a conserved hairpin near the 3'-end of 16S rRNA in the 30S particle. May play a critical role in biogenesis of 30S subunits. The chain is Ribosomal RNA small subunit methyltransferase A from Actinobacillus pleuropneumoniae serotype 5b (strain L20).